The chain runs to 210 residues: Na(+)-translocating NADH-quinone reductase subunit D (210 aa).

6 consecutive transmembrane segments (helical) span residues 11-31 (ILAP…VCSA), 42-62 (FVMT…VSLI), 70-90 (VRII…DQIL), 103-123 (VFVG…AFAM), 131-151 (FIDG…VGFF), and 178-198 (NGLM…IWAI).

Belongs to the NqrDE/RnfAE family. Composed of six subunits; NqrA, NqrB, NqrC, NqrD, NqrE and NqrF.

It localises to the cell inner membrane. It carries out the reaction a ubiquinone + n Na(+)(in) + NADH + H(+) = a ubiquinol + n Na(+)(out) + NAD(+). Its function is as follows. NQR complex catalyzes the reduction of ubiquinone-1 to ubiquinol by two successive reactions, coupled with the transport of Na(+) ions from the cytoplasm to the periplasm. NqrA to NqrE are probably involved in the second step, the conversion of ubisemiquinone to ubiquinol. In Vibrio anguillarum (Listonella anguillarum), this protein is Na(+)-translocating NADH-quinone reductase subunit D.